Reading from the N-terminus, the 23-residue chain is Caerulein precursor fragment R6 (23 aa).

Expressed by the skin glands.

Its subcellular location is the secreted. In terms of biological role, antimicrobial peptide. This chain is Caerulein precursor fragment R6, found in Xenopus ruwenzoriensis (Uganda clawed frog).